Reading from the N-terminus, the 815-residue chain is Probable bifunctional folylpolyglutamate synthase/dihydropteroate synthase (815 aa).

Residues 1–416 (MRYDEAANFL…LVAGSLFAVA (416 aa)) form a folylpolyglutamate synthase region. 47–53 (GSNGKGS) contacts ATP. The region spanning 553–803 (TAVMGILNVT…DVPENVAAVR (251 aa)) is the Pterin-binding domain. Positions 555–815 (VMGILNVTPD…EATRTGADAE (261 aa)) are DHPS. Asparagine 560 provides a ligand contact to Mg(2+). (7,8-dihydropterin-6-yl)methyl diphosphate is bound by residues threonine 600, aspartate 633, asparagine 652, aspartate 722, lysine 758, and 791 to 793 (RVH).

The protein in the N-terminal section; belongs to the folylpolyglutamate synthase family. This sequence in the C-terminal section; belongs to the DHPS family. Mg(2+) is required as a cofactor.

The catalysed reaction is (6S)-5,6,7,8-tetrahydrofolyl-(gamma-L-Glu)(n) + L-glutamate + ATP = (6S)-5,6,7,8-tetrahydrofolyl-(gamma-L-Glu)(n+1) + ADP + phosphate + H(+). The enzyme catalyses (7,8-dihydropterin-6-yl)methyl diphosphate + 4-aminobenzoate = 7,8-dihydropteroate + diphosphate. It functions in the pathway cofactor biosynthesis; tetrahydrofolylpolyglutamate biosynthesis. Its pathway is cofactor biosynthesis; tetrahydrofolate biosynthesis; 7,8-dihydrofolate from 2-amino-4-hydroxy-6-hydroxymethyl-7,8-dihydropteridine diphosphate and 4-aminobenzoate: step 1/2. In terms of biological role, can complement an H.volcanii mutant strain that is thymidine auxotroph because it lacks the two dihydrofolate reductase genes encoded by hdrA and hdrB. The chain is Probable bifunctional folylpolyglutamate synthase/dihydropteroate synthase (folP) from Halobacterium salinarum (strain ATCC 700922 / JCM 11081 / NRC-1) (Halobacterium halobium).